The chain runs to 155 residues: MLHKKYRPNVAAIIMSPDYPNTCEVFIAERIDIEGAWQFPQGGIDEGETPLEALHRELLEEIGTNEIEILAQYPRWIAYDFPSNMEHKFYAFDGQKQRYFLVRLKHANNIDLNKHTPEFRAYQFIHLKDLLKKIVPFKRQVYRQVIAYFKRDGYL.

Residues 5–147 (KYRPNVAAII…KRQVYRQVIA (143 aa)) enclose the Nudix hydrolase domain. Positions 42 to 63 (GGIDEGETPLEALHRELLEEIG) match the Nudix box motif.

This sequence belongs to the Nudix hydrolase family. RppH subfamily. The cofactor is a divalent metal cation.

Its function is as follows. Accelerates the degradation of transcripts by removing pyrophosphate from the 5'-end of triphosphorylated RNA, leading to a more labile monophosphorylated state that can stimulate subsequent ribonuclease cleavage. The sequence is that of RNA pyrophosphohydrolase from Helicobacter pylori (strain G27).